A 144-amino-acid chain; its full sequence is MAQRILVLHGPNLNLLGTREPHIYGSLTLAQIDQGLAALAGQLGVALTSWQSNHEGALVERIQAAAADGTDFIIINAAAYTHTSVAIRDALAAVAIPFIEVHLSNLYKRDSFRQHSYLSDLAIGLITGLGADGYEAALRYAARH.

Tyrosine 24 serves as the catalytic Proton acceptor. Substrate is bound by residues asparagine 76, histidine 82, and aspartate 89. The active-site Proton donor is the histidine 102. Substrate contacts are provided by residues 103–104 (LS) and arginine 113.

The protein belongs to the type-II 3-dehydroquinase family. Homododecamer.

The enzyme catalyses 3-dehydroquinate = 3-dehydroshikimate + H2O. Its pathway is metabolic intermediate biosynthesis; chorismate biosynthesis; chorismate from D-erythrose 4-phosphate and phosphoenolpyruvate: step 3/7. Its function is as follows. Catalyzes a trans-dehydration via an enolate intermediate. The chain is 3-dehydroquinate dehydratase from Bordetella bronchiseptica (strain ATCC BAA-588 / NCTC 13252 / RB50) (Alcaligenes bronchisepticus).